The sequence spans 617 residues: BPI fold-containing family B member 4 (617 aa).

A signal peptide spans 1–17 (MWTAWCVAALSVAAVCG). The disordered stretch occupies residues 124–149 (RPSDSAYHRGPGRYRSAADPSSAGRL). A glycan (N-linked (GlcNAc...) asparagine) is linked at N275. Cysteines 297 and 334 form a disulfide.

Belongs to the BPI/LBP/Plunc superfamily. BPI/LBP family. As to expression, highly expressed in olfactory mucosa but undetectable in thymus, kidney, lung, brain, spleen and liver.

Its subcellular location is the secreted. The protein localises to the cytoplasm. Functionally, may have the capacity to recognize and bind specific classes of odorants. May act as a carrier molecule, transporting odorants across the mucus layer to access receptor sites. May serve as a primary defense mechanism by recognizing and removing potentially harmful odorants or pathogenic microorganisms from the mucosa or clearing excess odorant from mucus to enable new odorant stimuli to be received. The chain is BPI fold-containing family B member 4 (Bpifb4) from Rattus norvegicus (Rat).